The sequence spans 622 residues: Dynein axonemal assembly factor 1 (622 aa).

The disordered stretch occupies residues 1 to 80 (MHPEVSEPQA…ARNDRDDRGP (80 aa)). Positions 22–42 (AGDHGRAGPGVRKEEINETKE) are enriched in basic and acidic residues. Residues 48 to 59 (STTSCQSQKQQS) show a composition bias toward low complexity. The span at 62–80 (SRLDCRSGYARNDRDDRGP) shows a compositional bias: basic and acidic residues. 6 LRR repeats span residues 101–123 (ALND…EEYT), 124–145 (GLRC…QAQS), 146–167 (ELRC…EPLQ), 168–189 (KLDA…SCLP), 190–211 (VLNT…QHLR), and 215–236 (RLCV…SVLE). Residues 249–288 (NPVTKHIPNYRRTVTVRLKQLTYLDDRPVFPKDRACAEAW) enclose the LRRCT domain. Over residues 326–336 (EERKKARDKGE) the composition is skewed to basic and acidic residues. The disordered stretch occupies residues 326–360 (EERKKARDKGETPLPDSEESSSTSPEAQDKPPLGE). A compositionally biased stretch (low complexity) spans 337–351 (TPLPDSEESSSTSPE). Phosphoserine is present on residues S349, S464, and S487. Disordered regions lie at residues 481-503 (SSLS…EHTP) and 540-622 (LETQ…FGLD). Polar residues predominate over residues 540-550 (LETQGQVFSTT).

It belongs to the DNAAF1 family.

The protein localises to the cell projection. The protein resides in the cilium. Cilium-specific protein required for the stability of the ciliary architecture. Plays a role in cytoplasmic preassembly of dynein arms. Involved in regulation of microtubule-based cilia and actin-based brush border microvilli. The sequence is that of Dynein axonemal assembly factor 1 (Dnaaf1) from Peromyscus leucopus (White-footed mouse).